The following is a 211-amino-acid chain: Large ribosomal subunit protein uL3 (211 aa).

The interval 134-155 (ATHGNSLSHRAPGSIGQNQTPG) is disordered. Glutamine 152 is modified (N5-methylglutamine).

Belongs to the universal ribosomal protein uL3 family. Part of the 50S ribosomal subunit. Forms a cluster with proteins L14 and L19. Methylated by PrmB.

In terms of biological role, one of the primary rRNA binding proteins, it binds directly near the 3'-end of the 23S rRNA, where it nucleates assembly of the 50S subunit. This chain is Large ribosomal subunit protein uL3, found in Methylococcus capsulatus (strain ATCC 33009 / NCIMB 11132 / Bath).